We begin with the raw amino-acid sequence, 340 residues long: UDP-3-O-(3-hydroxymyristoyl)glucosamine N-acyltransferase (340 aa).

The Proton acceptor role is filled by His239.

It belongs to the transferase hexapeptide repeat family. LpxD subfamily. As to quaternary structure, homotrimer.

The catalysed reaction is a UDP-3-O-[(3R)-3-hydroxyacyl]-alpha-D-glucosamine + a (3R)-hydroxyacyl-[ACP] = a UDP-2-N,3-O-bis[(3R)-3-hydroxyacyl]-alpha-D-glucosamine + holo-[ACP] + H(+). It catalyses the reaction UDP-3-O-[(3R)-3-hydroxytetradecanoyl]-alpha-D-glucosamine + (3R)-hydroxytetradecanoyl-[ACP] = UDP-2-N,3-O-bis[(3R)-3-hydroxytetradecanoyl]-alpha-D-glucosamine + holo-[ACP] + H(+). It participates in glycolipid biosynthesis; lipid IV(A) biosynthesis; lipid IV(A) from (3R)-3-hydroxytetradecanoyl-[acyl-carrier-protein] and UDP-N-acetyl-alpha-D-glucosamine: step 3/6. In terms of biological role, catalyzes the N-acylation of UDP-3-O-(hydroxytetradecanoyl)glucosamine using 3-hydroxytetradecanoyl-ACP as the acyl donor. Is involved in the biosynthesis of lipid A, a phosphorylated glycolipid that anchors the lipopolysaccharide to the outer membrane of the cell. The chain is UDP-3-O-(3-hydroxymyristoyl)glucosamine N-acyltransferase from Yersinia pestis bv. Antiqua (strain Antiqua).